The sequence spans 227 residues: tRNA (guanine-N(1)-)-methyltransferase (227 aa).

S-adenosyl-L-methionine-binding positions include glycine 111 and 135–140 (LGDYVL).

The protein belongs to the RNA methyltransferase TrmD family. Homodimer.

Its subcellular location is the cytoplasm. The enzyme catalyses guanosine(37) in tRNA + S-adenosyl-L-methionine = N(1)-methylguanosine(37) in tRNA + S-adenosyl-L-homocysteine + H(+). Its function is as follows. Specifically methylates guanosine-37 in various tRNAs. The sequence is that of tRNA (guanine-N(1)-)-methyltransferase from Leifsonia xyli subsp. xyli (strain CTCB07).